A 622-amino-acid polypeptide reads, in one-letter code: MNRYTTMRQLGDGTYGSVLMGKSNESGELVAIKRMKRKFYSWDECMNLREVKSLKKLNHANVIKLKEVIRENDHLYFIFEYMKENLYQLMKDRNKLFPESVIRNIMYQILQGLAFIHKHGFFHRDMKPENLLCMGPELVKIADFGLARELRSQPPYTDYVSTRWYRAPEVLLRSSVYSSPIDVWAVGSIMAELYTFRPLFPGTSEVDEIFKICQVLGTPKKSDWPEGYQLASSMNFRFPQCIPINLKTLIPNASSEAIQLMTEMLNWDPKKRPTASQALKHPYFQVGQVLGPSAHHLDAKQTLHKQLQPPEPKPSSSERDPKPLPNILDQPAGQPQPKQGHQPLQAIQPPQNTVVQPPPKQQGHHKQPQTMFPSIVKTIPTNPVSTVGHKGARRRWGQTVFKSGDSCDNIEDCDLGASHSKKPSMDAFKEKKKKESPFRFPEAGLPVSNHLKGENRNLHASLKSDTNLSTASTAKQYYLKQSRYLPGVNPKNVSLVAGGKDINSHSWNNQLFPKSLGSMGADLAFKRSNAAGNLGSYSAYSQTGCVPSFLKKEVGSAGQRIHLAPLGASAADYTWSTKTGQGQFSGRTYNPTAKNLNIVNRTQPVPSVHGRTDWVAKYGGHR.

Residues 4 to 284 enclose the Protein kinase domain; sequence YTTMRQLGDG…ASQALKHPYF (281 aa). ATP-binding positions include 10–18 and Lys-33; that span reads LGDGTYGSV. Asp-125 acts as the Proton acceptor in catalysis. At Thr-157 the chain carries Phosphothreonine; by autocatalysis. At Tyr-159 the chain carries Phosphotyrosine; by autocatalysis. The tract at residues 301–373 is disordered; that stretch reads QTLHKQLQPP…HHKQPQTMFP (73 aa).

The protein belongs to the protein kinase superfamily. CMGC Ser/Thr protein kinase family. CDC2/CDKX subfamily. Interacts with RP1. Interacts with AR and CDK20. Found in a complex containing MAK, AR and NCOA3. Interacts with FZR1 (via WD repeats). Mg(2+) serves as cofactor. Post-translationally, autophosphorylated. Phosphorylated on serine and threonine residues. In terms of tissue distribution, expressed mainly in testicular cells at and after meiosis.

The protein localises to the nucleus. It localises to the cytoplasm. Its subcellular location is the cytoskeleton. The protein resides in the microtubule organizing center. It is found in the centrosome. The protein localises to the spindle. It localises to the midbody. Its subcellular location is the cell projection. The protein resides in the cilium. It is found in the photoreceptor outer segment. The protein localises to the photoreceptor inner segment. The catalysed reaction is L-seryl-[protein] + ATP = O-phospho-L-seryl-[protein] + ADP + H(+). The enzyme catalyses L-threonyl-[protein] + ATP = O-phospho-L-threonyl-[protein] + ADP + H(+). In terms of biological role, essential for the regulation of ciliary length and required for the long-term survival of photoreceptors. Could play an important function in spermatogenesis. Phosphorylates FZR1 in a cell cycle-dependent manner. Plays a role in the transcriptional coactivation of AR. In Rattus norvegicus (Rat), this protein is Serine/threonine-protein kinase MAK (Mak).